Reading from the N-terminus, the 347-residue chain is Selenide, water dikinase (347 aa).

The active site involves Sec17. Position 17 (Sec17) is a non-standard amino acid, selenocysteine. Residues Lys20 and 48 to 50 (TAD) each bind ATP. Residue Asp51 participates in Mg(2+) binding. ATP is bound by residues Asp68, Asp91, and 139–141 (GHS). Position 91 (Asp91) interacts with Mg(2+). Asp227 is a Mg(2+) binding site.

It belongs to the selenophosphate synthase 1 family. Class I subfamily. Homodimer. The cofactor is Mg(2+).

It carries out the reaction hydrogenselenide + ATP + H2O = selenophosphate + AMP + phosphate + 2 H(+). Functionally, synthesizes selenophosphate from selenide and ATP. This chain is Selenide, water dikinase, found in Haemophilus influenzae (strain 86-028NP).